A 524-amino-acid chain; its full sequence is Putative ATP-dependent RNA helicase R458 (524 aa).

In terms of domain architecture, Helicase ATP-binding spans 125–338; sequence VPELIQRKDT…NSYFRKYSPI (214 aa). 138-145 contacts ATP; sequence FKSGTGKT. A DEFD box motif is present at residues 268-271; it reads DEFD. The region spanning 373–524 is the Helicase C-terminal domain; it reads IILDLLKQCR…QLPGDLSTLL (152 aa).

Belongs to the DEAD box helicase family. eIF4A subfamily.

The enzyme catalyses ATP + H2O = ADP + phosphate + H(+). Its function is as follows. Putative ATP-dependent RNA helicase. The protein is Putative ATP-dependent RNA helicase R458 of Acanthamoeba polyphaga mimivirus (APMV).